Consider the following 205-residue polypeptide: MSKRIAAKHKIDRRMGENIWGRSKSPVNRREYGPGQHGQRRKGKLSDFGVQLRAKQKLKGYYGSIGEKQFHKVYVEASRLKGDTGANLIGLLERRLDAVVYRAKFVPTIFAARQFVSHGHVKVNGQRVNIPSYLVKVGDVVEVKEASRQMTLVLEAQQLGERDVPDYIELDAGKLAARFARIPELNEVPYPVQMEPNLVVEFYSR.

The disordered stretch occupies residues 18-46; the sequence is NIWGRSKSPVNRREYGPGQHGQRRKGKLS. Residues 94–157 enclose the S4 RNA-binding domain; the sequence is RRLDAVVYRA…RQMTLVLEAQ (64 aa).

This sequence belongs to the universal ribosomal protein uS4 family. As to quaternary structure, part of the 30S ribosomal subunit. Contacts protein S5. The interaction surface between S4 and S5 is involved in control of translational fidelity.

Functionally, one of the primary rRNA binding proteins, it binds directly to 16S rRNA where it nucleates assembly of the body of the 30S subunit. Its function is as follows. With S5 and S12 plays an important role in translational accuracy. The chain is Small ribosomal subunit protein uS4 from Xanthobacter autotrophicus (strain ATCC BAA-1158 / Py2).